The sequence spans 124 residues: Small ribosomal subunit protein uS13 (124 aa).

The segment at 95-124 is disordered; that stretch reads GLPVRGQRTKTNARTRKGPKRTIAGKKKAR.

It belongs to the universal ribosomal protein uS13 family. Part of the 30S ribosomal subunit. Forms a loose heterodimer with protein S19. Forms two bridges to the 50S subunit in the 70S ribosome.

Functionally, located at the top of the head of the 30S subunit, it contacts several helices of the 16S rRNA. In the 70S ribosome it contacts the 23S rRNA (bridge B1a) and protein L5 of the 50S subunit (bridge B1b), connecting the 2 subunits; these bridges are implicated in subunit movement. Contacts the tRNAs in the A and P-sites. This Mycobacterium sp. (strain JLS) protein is Small ribosomal subunit protein uS13.